Reading from the N-terminus, the 907-residue chain is MTAVHAGNINFKWDPKSLEIRTLAVERLLEPLVTQVTTLVNTNSKGPSNKKRGRSKKAHVLAASVEQATENFLDKGDKIAKESQFLKEELVAAVEDVRKQGDLMKSAAGEFADDPCSSVKRGNMVRAARALLSAVTRLLILADMADVYKLLVQLKVVEDGILKLRNAGNEQDLGIQYKALKPEVDKLNIMAAKRQQELKDVGHRDQMAAARGILQKNVPILYTASQACLQHPDVAAYKANRDLIYKQLQQAVNGISNAAQATTSDDASQHPGGSGGGELAYALNDFDKQIIVDPLSFSEERFRPSLEERLESIISGAALMADSSCTRDDRRERIVAECNAVRQALQDLLSEYMGNAGRKERSDALNSAIDKMTKKTRDLRRQLRKAVMDHVSDSFLETNVPLLVLIEAAKNGNEKEVKEYAQVFREHANKLIEVANLACSISNNEEGVKLVRMSASQLEALCPQVINAALALAAKPQSKLAQENMDLFKEQWEKQVRVLTDAVDDITSIDDFLAVSENHILEDVNKCVIALQEKDVDGLDRTAGAIRGRAARVIHVVTSEMDNYEPGVYTEKVLEATKLLSNTVMPRFTEQVEAAVEALSSDPAQPMDENEFIDASRLVYDGIRDIRKAVLMIRTPEELDDSDFETEDFDVRSRTSVQTEDDQLIAGQSARAIMAQLPQEQKAKIAEQVASFQEEKSKLDAEVSKWDDSGNDIIVLAKQMCMIMMEMTDFTRGKGPLKNTSDVISAAKKIAEAGSRMDKLGRTIADHCPDSACKQDLLAYLQRIALYCHQLNICSKVKAEVQNLGGELVVSGVDSAMSLIQAAKNLMNAVVQTVKASYVASTKYQKSQGMASLNLPAVSWKMKAPEKKPLVKREKQDETQTKIKRASQKKHVNPVQALSEFKAMDSI.

T2 carries the post-translational modification N-acetylthreonine. Residues 2-228 form an involved in homodimerization region; the sequence is TAVHAGNINF…PILYTASQAC (227 aa). Residue K57 forms a Glycyl lysine isopeptide (Lys-Gly) (interchain with G-Cter in SUMO2) linkage. Residues 97–148 form an interaction with JUP and CTNNB1 region; that stretch reads VRKQGDLMKSAAGEFADDPCSSVKRGNMVRAARALLSAVTRLLILADMADVY. Phosphoserine occurs at positions 264, 268, 296, and 298. Residues 326–395 form an interaction with alpha-actinin region; sequence TRDDRRERIV…AVMDHVSDSF (70 aa). T635 bears the Phosphothreonine mark. S642 is modified (phosphoserine). Phosphothreonine is present on T646. 2 positions are modified to phosphoserine: S653 and S656. Residue T659 is modified to Phosphothreonine. K798 is covalently cross-linked (Glycyl lysine isopeptide (Lys-Gly) (interchain with G-Cter in SUMO2)). Residue S852 is modified to Phosphoserine. A compositionally biased stretch (basic and acidic residues) spans 865–881; it reads PEKKPLVKREKQDETQT. The segment at 865–895 is disordered; that stretch reads PEKKPLVKREKQDETQTKIKRASQKKHVNPV. The segment covering 882–892 has biased composition (basic residues); it reads KIKRASQKKHV.

This sequence belongs to the vinculin/alpha-catenin family. As to quaternary structure, monomer and homodimer; the monomer preferentially binds to CTNNB1 and the homodimer to actin. Component of an cadherin:catenin adhesion complex composed of at least of CDH26, beta-catenin/CTNNB1, alpha-catenin/CTNNA1 and p120 catenin/CTNND1. Possible component of an E-cadherin/ catenin adhesion complex together with E-cadherin/CDH1 and beta-catenin/CTNNB1 or gamma-catenin/JUP; the complex is located to adherens junctions. The stable association of CTNNA1 is controversial as CTNNA1 was shown not to bind to F-actin when assembled in the complex. Alternatively, the CTNNA1-containing complex may be linked to F-actin by other proteins such as LIMA1. Binds AFDN and F-actin. Interacts with ARHGAP21. Interacts with AJUBA. Interacts with LIMA1. Interacts with vinculin/VCL. Interacts with TJP2/ZO2 (via N-terminus). Interacts with TJP1/ZO1 (via N-terminus). Sumoylated. In terms of processing, phosphorylation seems to contribute to the strength of cell-cell adhesion rather than to the basic capacity for cell-cell adhesion.

The protein localises to the cytoplasm. It localises to the cytoskeleton. The protein resides in the cell junction. It is found in the adherens junction. Its subcellular location is the cell membrane. The protein localises to the nucleus. In terms of biological role, associates with the cytoplasmic domain of a variety of cadherins. The association of catenins to cadherins produces a complex which is linked to the actin filament network, and which seems to be of primary importance for cadherins cell-adhesion properties. Can associate with both E- and N-cadherins. Originally believed to be a stable component of E-cadherin/catenin adhesion complexes and to mediate the linkage of cadherins to the actin cytoskeleton at adherens junctions. In contrast, cortical actin was found to be much more dynamic than E-cadherin/catenin complexes and CTNNA1 was shown not to bind to F-actin when assembled in the complex suggesting a different linkage between actin and adherens junctions components. The homodimeric form may regulate actin filament assembly and inhibit actin branching by competing with the Arp2/3 complex for binding to actin filaments. Involved in the regulation of WWTR1/TAZ, YAP1 and TGFB1-dependent SMAD2 and SMAD3 nuclear accumulation. May play a crucial role in cell differentiation. The protein is Catenin alpha-1 of Oryctolagus cuniculus (Rabbit).